The chain runs to 386 residues: 11-beta-hydroxysteroid dehydrogenase type 2 (386 aa).

An NAD(+)-binding site is contributed by 82–111 (TRAVLITGCDTGFGKETAKKLDAMGFTVLA). Serine 219 contributes to the substrate binding site. The Proton acceptor role is filled by tyrosine 232.

This sequence belongs to the short-chain dehydrogenases/reductases (SDR) family. In terms of assembly, interacts with ligand-free cytoplasmic NR3C2. As to expression, highly expressed in kidney. Also found in colon and small intestine. Not expressed in the adrenal gland. Expressed in uterus.

It localises to the microsome. It is found in the endoplasmic reticulum. The enzyme catalyses an 11beta-hydroxysteroid + NAD(+) = an 11-oxosteroid + NADH + H(+). It catalyses the reaction corticosterone + NAD(+) = 11-dehydrocorticosterone + NADH + H(+). The catalysed reaction is 11beta,17beta-dihydroxyandrost-4-ene-3-one + NAD(+) = 17beta-hydroxyandrost-4-ene-3,11-dione + NADH + H(+). It carries out the reaction 11beta-hydroxyandrost-4-ene-3,17-dione + NAD(+) = androst-4-ene-3,11,17-trione + NADH + H(+). Its pathway is steroid metabolism. Its activity is regulated as follows. Inhibited by glycyrrhetinic acid. Induced by progesterone, through the Ihh signaling pathway. In terms of biological role, catalyzes the conversion of biologically active 11beta-hydroxyglucocorticoids (11beta-hydroxysteroid) such as corticosterone, to inactive 11-ketoglucocorticoids (11-oxosteroid) such as 11-dehydrocorticosterone, in the presence of NAD(+). Functions as a dehydrogenase (oxidase), thereby decreasing the concentration of active glucocorticoids, thus protecting the nonselective mineralocorticoid receptor from occupation by glucocorticoids. Plays an important role in maintaining glucocorticoids balance during preimplantation and protects the fetus from excessive maternal corticosterone exposure. Catalyzes the oxidation of 11beta-hydroxytestosterone (11beta,17beta-dihydroxyandrost-4-ene-3-one) to 11-ketotestosterone (17beta-hydroxyandrost-4-ene-3,11-dione), a major bioactive androgen. Catalyzes the conversion of 11beta-hydroxyandrostenedione (11beta-hydroxyandrost-4-ene-3,17-dione) to 11-ketoandrostenedione (androst-4-ene-3,11,17-trione), which can be further metabolized to 11-ketotestosterone. Converts 7-beta-25-dihydroxycholesterol to 7-oxo-25-hydroxycholesterol in vitro. 7-beta-25-dihydroxycholesterol (not 7-oxo-25-hydroxycholesterol) acts as a ligand for the G-protein-coupled receptor (GPCR) Epstein-Barr virus-induced gene 2 (EBI2) and may thereby regulate immune cell migration. This Mus musculus (Mouse) protein is 11-beta-hydroxysteroid dehydrogenase type 2 (Hsd11b2).